We begin with the raw amino-acid sequence, 170 residues long: Cathelicidin antimicrobial peptide (170 aa).

Positions 1-30 (MDTQRDSPSLGRWSLVLLLLGLVMPLAIVA) are cleaved as a signal peptide. The propeptide at 31-131 (QVLSYQEAVL…DISCDKDNRR (101 aa)) is cathelin-like domain (CLD). 2 cysteine pairs are disulfide-bonded: C86/C97 and C108/C125. Residues 150 to 162 (FKRIVQRIKDFLQ) are active core.

Belongs to the cathelicidin family. Monomer, homodimer or homotrimer (in vitro). Oligomerizes as tetra- or hexamer in solution (in vitro). In terms of processing, proteolytically cleaved by proteinase PRTN3 into antibacterial peptide LL-37. Proteolytically cleaved by cathepsin CTSG and neutrophil elastase ELANE. Resistant to proteolytic degradation in solution, and when bound to both zwitterionic (mimicking mammalian membranes) and negatively charged membranes (mimicking bacterial membranes). Post-translationally, after secretion onto the skin surface, the CAMP gene product is processed by a serine protease-dependent mechanism into multiple novel antimicrobial peptides distinct from and shorter than cathelicidin LL-37. These peptides show enhanced antimicrobial action, acquiring the ability to kill skin pathogens such as S.aureus, E.coli and C.albicans. These peptides have lost the ability to stimulate CXCL8/IL8 release from keratinocytes. The peptides act synergistically, killing bacteria at lower concentrations when present together, and maintain activity at increased salt condition.

It localises to the secreted. It is found in the vesicle. Its function is as follows. Antimicrobial protein that is an integral component of the innate immune system. Binds to bacterial lipopolysaccharides (LPS). Acts via neutrophil N-formyl peptide receptors to enhance the release of CXCL2. Postsecretory processing generates multiple cathelicidin antimicrobial peptides with various lengths which act as a topical antimicrobial defense in sweat on skin. The unprocessed precursor form, cathelicidin antimicrobial peptide, inhibits the growth of Gram-negative E.coli and E.aerogenes with efficiencies comparable to that of the mature peptide LL-37 (in vitro). In terms of biological role, antimicrobial peptide that is an integral component of the innate immune system. Binds to bacterial lipopolysaccharides (LPS). Causes membrane permeabilization by forming transmembrane pores (in vitro). Causes lysis of E.coli. Exhibits antimicrobial activity against Gram-negative bacteria such as P.aeruginosa, S.typhimurium, E.aerogenes, E.coli and P.syringae, Gram-positive bacteria such as L.monocytogenes, S.epidermidis, S.pyogenes and S.aureus, as well as vancomycin-resistant enterococci (in vitro). Exhibits antimicrobial activity against methicillin-resistant S.aureus, P.mirabilis, and C.albicans in low-salt media, but not in media containing 100 mM NaCl (in vitro). Forms chiral supramolecular assemblies with quinolone signal (PQS) molecules of P.aeruginosa, which may lead to interference of bacterial quorum signaling and perturbance of bacterial biofilm formation. May form supramolecular fiber-like assemblies on bacterial membranes. Induces cytokine and chemokine producation as well as TNF/TNFA and CSF2/GMCSF production in normal human keratinocytes. Exhibits hemolytic activity against red blood cells. Functionally, exhibits antimicrobial activity against E.coli and B.megaterium (in vitro). In Nomascus leucogenys (Northern white-cheeked gibbon), this protein is Cathelicidin antimicrobial peptide.